The chain runs to 399 residues: Elongation factor Tu (399 aa).

Residues 10–209 (KPHVNIGTIG…KVDEYIPTPV (200 aa)) form the tr-type G domain. Positions 19-26 (GHVDHGKT) are G1. GTP is bound at residue 19–26 (GHVDHGKT). Threonine 26 is a binding site for Mg(2+). Residues 60–64 (GITIA) are G2. Residues 81–84 (DCPG) form a G3 region. Residues 81-85 (DCPGH) and 136-139 (NKAD) each bind GTP. The G4 stretch occupies residues 136–139 (NKAD). Residues 174–176 (SAL) form a G5 region.

The protein belongs to the TRAFAC class translation factor GTPase superfamily. Classic translation factor GTPase family. EF-Tu/EF-1A subfamily. Monomer.

The protein localises to the cytoplasm. The catalysed reaction is GTP + H2O = GDP + phosphate + H(+). In terms of biological role, GTP hydrolase that promotes the GTP-dependent binding of aminoacyl-tRNA to the A-site of ribosomes during protein biosynthesis. This chain is Elongation factor Tu, found in Campylobacter curvus (strain 525.92).